Here is a 342-residue protein sequence, read N- to C-terminus: Anthranilate phosphoribosyltransferase (342 aa).

5-phospho-alpha-D-ribose 1-diphosphate is bound by residues glycine 79, 82–83, threonine 87, 89–92, 107–115, and serine 119; these read GD, NVST, and KHGNRSVSS. Glycine 79 serves as a coordination point for anthranilate. Residue serine 91 participates in Mg(2+) binding. An anthranilate-binding site is contributed by asparagine 110. Arginine 165 is an anthranilate binding site. 2 residues coordinate Mg(2+): aspartate 223 and glutamate 224.

This sequence belongs to the anthranilate phosphoribosyltransferase family. Homodimer. Requires Mg(2+) as cofactor.

The catalysed reaction is N-(5-phospho-beta-D-ribosyl)anthranilate + diphosphate = 5-phospho-alpha-D-ribose 1-diphosphate + anthranilate. The protein operates within amino-acid biosynthesis; L-tryptophan biosynthesis; L-tryptophan from chorismate: step 2/5. Its function is as follows. Catalyzes the transfer of the phosphoribosyl group of 5-phosphorylribose-1-pyrophosphate (PRPP) to anthranilate to yield N-(5'-phosphoribosyl)-anthranilate (PRA). In Aeromonas hydrophila subsp. hydrophila (strain ATCC 7966 / DSM 30187 / BCRC 13018 / CCUG 14551 / JCM 1027 / KCTC 2358 / NCIMB 9240 / NCTC 8049), this protein is Anthranilate phosphoribosyltransferase.